We begin with the raw amino-acid sequence, 226 residues long: Protein transport protein sec20 (226 aa).

The Cytoplasmic segment spans residues 1–189 (MADVLNALEE…IKSLKLSDRS (189 aa)). A coiled-coil region spans residues 53-75 (LRYEKAVQEYIRLNRRYRNKIAS). Position 97 is a phosphoserine (Ser97). A helical; Anchor for type IV membrane protein membrane pass occupies residues 190 to 210 (DYFLVVSGFGFFIFVVVYLLF). Over 211–226 (KRIVWPILSMFLWFLR) the chain is Lumenal.

It belongs to the SEC20 family. As to quaternary structure, component of a SNARE complex consisting of ufe1, sec20, sec22 and use1. Interacts with tip20 through its cytoplasmic domain.

It localises to the endoplasmic reticulum membrane. Its function is as follows. SNARE required for targeting and fusion of Golgi-derived retrograde transport vesicles with the ER. This Schizosaccharomyces pombe (strain 972 / ATCC 24843) (Fission yeast) protein is Protein transport protein sec20.